We begin with the raw amino-acid sequence, 177 residues long: ATP synthase subunit b (177 aa).

A helical transmembrane segment spans residues glycine 15 to leucine 35.

It belongs to the ATPase B chain family. F-type ATPases have 2 components, F(1) - the catalytic core - and F(0) - the membrane proton channel. F(1) has five subunits: alpha(3), beta(3), gamma(1), delta(1), epsilon(1). F(0) has three main subunits: a(1), b(2) and c(10-14). The alpha and beta chains form an alternating ring which encloses part of the gamma chain. F(1) is attached to F(0) by a central stalk formed by the gamma and epsilon chains, while a peripheral stalk is formed by the delta and b chains.

The protein resides in the cell membrane. Its function is as follows. F(1)F(0) ATP synthase produces ATP from ADP in the presence of a proton or sodium gradient. F-type ATPases consist of two structural domains, F(1) containing the extramembraneous catalytic core and F(0) containing the membrane proton channel, linked together by a central stalk and a peripheral stalk. During catalysis, ATP synthesis in the catalytic domain of F(1) is coupled via a rotary mechanism of the central stalk subunits to proton translocation. In terms of biological role, component of the F(0) channel, it forms part of the peripheral stalk, linking F(1) to F(0). The polypeptide is ATP synthase subunit b (Geobacillus kaustophilus (strain HTA426)).